Reading from the N-terminus, the 100-residue chain is uncharacterized protein (100 aa).

The protein localises to the virion. This is an uncharacterized protein from Acanthamoeba polyphaga mimivirus (APMV).